Reading from the N-terminus, the 312-residue chain is Dihydroorotate dehydrogenase B (NAD(+)), catalytic subunit (312 aa).

FMN contacts are provided by residues S21 and 45-46; that span reads KA. Residues K45 and 69–73 contribute to the substrate site; that span reads NAIGL. Positions 99 and 127 each coordinate FMN. N127 contacts substrate. C130 serves as the catalytic Nucleophile. Residues K165 and I191 each coordinate FMN. 192–193 contacts substrate; that stretch reads NT. FMN-binding positions include G217, 243–244, and 265–266; these read GG and GT.

This sequence belongs to the dihydroorotate dehydrogenase family. Type 1 subfamily. Heterotetramer of 2 PyrK and 2 PyrD type B subunits. The cofactor is FMN.

The protein resides in the cytoplasm. The enzyme catalyses (S)-dihydroorotate + NAD(+) = orotate + NADH + H(+). The protein operates within pyrimidine metabolism; UMP biosynthesis via de novo pathway; orotate from (S)-dihydroorotate (NAD(+) route): step 1/1. In terms of biological role, catalyzes the conversion of dihydroorotate to orotate with NAD(+) as electron acceptor. The sequence is that of Dihydroorotate dehydrogenase B (NAD(+)), catalytic subunit (pyrD) from Anoxybacillus flavithermus (strain DSM 21510 / WK1).